The chain runs to 533 residues: MVRAKRTKRASVTDIYRGCKAAGTCPPDVINKVEHTTIADKILQYGSAGVFFGGLGISTGRGTGGATGYVPLGEGPGVRVGGTPTIVRPGVIPEIIGPTDLIPLDTVRPIDPTAPSIVTGTDSTVDLLPGEIESIAEIHPVPVDNAVVDTPVVTEGRRGSSAILEVADPSPPMRTRVARTQYHNPAFQIISESTPMSGESSLADHIIVFEGSGGQLVGGPRESYTASSENIELQEFPSRYSFEIDEGTPPRTSTPVQRAVQSLSSLRRALYNRRLTEQVAVTDPLFLSRPSRLVQFQFDNPAFEDEVTQIFERDLSTVEEPPDRQFLDVQRLSRPLYTETPQGYVRVSRLGRRATIRTRSGAQVGAQVHFYRDLSTINTEEPIEMQLLGEHSGDSTIVQGPVESSIVDVNIDEPDGLEVGRQETPSVEDVDFNSEDLLLDEGVEDFSGSQLVVGTRRSTNTLTVPRFETPRDTSFYIQDIQGYTVSYPESRQTTDIIFPHPDTPTVVIHINDTSGDYYLHPSLQRKKRKRKYL.

Residues 1–10 (MVRAKRTKRA) carry the Nuclear localization signal motif. The cysteines at positions 19 and 25 are disulfide-linked. A Nuclear localization signal motif is present at residues 525–532 (RKKRKRKY).

It belongs to the papillomaviridae L2 protein family. As to quaternary structure, interacts with major capsid protein L1. Interacts with E2; this interaction inhibits E2 transcriptional activity but not the DNA replication function E2. Interacts with host GADD45GIP1. Interacts with host HSPA8; this interaction is required for L2 nuclear translocation. Interacts with host importins KPNB2 and KPNB3. Forms a complex with importin alpha2-beta1 heterodimers via interaction with the importin alpha2 adapter. Interacts with host DYNLT1; this interaction is essential for virus intracellular transport during entry. Interacts (via C-terminus) with host retromer subunits VPS35 and VPS29. Post-translationally, highly phosphorylated.

Its subcellular location is the virion. It localises to the host nucleus. The protein localises to the host early endosome. The protein resides in the host Golgi apparatus. Minor protein of the capsid that localizes along the inner surface of the virion, within the central cavities beneath the L1 pentamers. Plays a role in capsid stabilization through interaction with the major capsid protein L1. Once the virion enters the host cell, L2 escorts the genomic DNA into the nucleus by promoting escape from the endosomal compartments and traffic through the host Golgi network. Mechanistically, the C-terminus of L2 possesses a cell-penetrating peptide that protudes from the host endosome, interacts with host cytoplasmic retromer cargo and thereby mediates the capsid delivery to the host trans-Golgi network. Plays a role through its interaction with host dynein in the intracellular microtubule-dependent transport of viral capsid toward the nucleus. Mediates the viral genome import into the nucleus through binding to host importins. Once within the nucleus, L2 localizes viral genomes to host PML bodies in order to activate early gene expression for establishment of infection. Later on, promotes late gene expression by interacting with the viral E2 protein and by inhibiting its transcriptional activation functions. During virion assembly, encapsidates the genome by direct interaction with the viral DNA. The sequence is that of Minor capsid protein L2 from Homo sapiens (Human).